The chain runs to 268 residues: Inositol polyphosphate multikinase (268 aa).

ATP is bound by residues Lys-27, 86-88 (ENI), and Asp-99. 127-135 (TSGSLGFRI) contributes to the substrate binding site. Asp-235 contributes to the ATP binding site.

The protein belongs to the inositol phosphokinase (IPK) family.

Its subcellular location is the cytoplasm. It is found in the nucleus. The catalysed reaction is 1D-myo-inositol 1,4,5-trisphosphate + 2 ATP = 1D-myo-inositol 1,3,4,5,6-pentakisphosphate + 2 ADP + 2 H(+). It catalyses the reaction 1D-myo-inositol 1,4,5-trisphosphate + ATP = 1D-myo-inositol 1,4,5,6-tetrakisphosphate + ADP + H(+). The enzyme catalyses 1D-myo-inositol 1,4,5-trisphosphate + ATP = 1D-myo-inositol 1,3,4,5-tetrakisphosphate + ADP + H(+). It carries out the reaction 1D-myo-inositol 1,4,5,6-tetrakisphosphate + ATP = 1D-myo-inositol 1,3,4,5,6-pentakisphosphate + ADP + H(+). In terms of biological role, inositol phosphate kinase with both monophosphoinositol and diphosphoinositol polyphosphate synthase activities. Able to phosphorylate inositol 1,4,5-trisphosphate (Ins(1,4,5)P3) on both the carbon-3 and carbon-6 positions to synthesize inositol 1,3,4,5-tetrakisphosphate (Ins(1,3,4,5)P4) and inositol 1,4,5,6-tetrakisphosphate (Ins(1,4,5,6)P4), and then to subsequently phosphorylate and convert either isomer of InsP4 to inositol 1,3,4,5,6-pentakisphosphate (Ins(1,3,4,5,6)P5). Also converts (Ins(1,3,4,5,6)P5) to InsP6. Also has a role in transcription regulation. The catalytic activity is required for PHO gene repression by phosphate and for NCR gene activation in response to nitrogen availability, indicating a role for inositol pyrophosphates in these controls. Inositol polyphosphates may be involved in the regulation of chromatin remodeling of transcription. This is Inositol polyphosphate multikinase (arg82) from Schizosaccharomyces pombe (strain 972 / ATCC 24843) (Fission yeast).